The sequence spans 138 residues: Large ribosomal subunit protein bL19 (138 aa).

Belongs to the bacterial ribosomal protein bL19 family.

In terms of biological role, this protein is located at the 30S-50S ribosomal subunit interface and may play a role in the structure and function of the aminoacyl-tRNA binding site. The protein is Large ribosomal subunit protein bL19 (rplS) of Rickettsia prowazekii (strain Madrid E).